We begin with the raw amino-acid sequence, 146 residues long: Anti-sigma F factor (146 aa).

This sequence belongs to the anti-sigma-factor family.

It carries out the reaction L-seryl-[protein] + ATP = O-phospho-L-seryl-[protein] + ADP + H(+). The catalysed reaction is L-threonyl-[protein] + ATP = O-phospho-L-threonyl-[protein] + ADP + H(+). Its function is as follows. Binds to sigma F and blocks its ability to form an RNA polymerase holoenzyme (E-sigma F). Phosphorylates SpoIIAA on a serine residue. This phosphorylation may enable SpoIIAA to act as an anti-anti-sigma factor that counteracts SpoIIAB and thus releases sigma F from inhibition. The protein is Anti-sigma F factor of Bacillus licheniformis.